The chain runs to 336 residues: N-lysine methyltransferase KMT5A-B (336 aa).

2 disordered regions span residues 1–107 (MGRG…SSKQ) and 141–165 (QSQK…NRKL). The segment covering 67-93 (SVAHHESKNLGKPTTETRKKAEVEKKR) has biased composition (basic and acidic residues). Over residues 95–104 (SSATELSVKS) the composition is skewed to polar residues. The segment covering 146–162 (VKNKSQRRKAQRKKSPN) has biased composition (basic residues). The 122-residue stretch at 200-321 (DGMKMDMIIG…VGEELLYDYG (122 aa)) folds into the SET domain. S-adenosyl-L-methionine-binding positions include 210 to 212 (KGR), Tyr-255, and 282 to 283 (NH).

Belongs to the class V-like SAM-binding methyltransferase superfamily. Histone-lysine methyltransferase family. PR/SET subfamily. Phosphorylated during mitosis.

It localises to the nucleus. The protein localises to the chromosome. It catalyses the reaction L-lysyl(20)-[histone H4] + S-adenosyl-L-methionine = N(6)-methyl-L-lysyl(20)-[histone H4] + S-adenosyl-L-homocysteine + H(+). The enzyme catalyses L-lysyl-[protein] + S-adenosyl-L-methionine = N(6)-methyl-L-lysyl-[protein] + S-adenosyl-L-homocysteine + H(+). Functionally, protein-lysine N-methyltransferase that monomethylates both histones and non-histone proteins. Specifically monomethylates 'Lys-20' of histone H4 (H4K20me1). H4K20me1 is enriched during mitosis and represents a specific tag for epigenetic transcriptional repression. Mainly functions in euchromatin regions, thereby playing a central role in the silencing of euchromatic genes. Required for cell proliferation, probably by contributing to the maintenance of proper higher-order structure of DNA during mitosis. Involved in chromosome condensation and proper cytokinesis. The chain is N-lysine methyltransferase KMT5A-B from Xenopus laevis (African clawed frog).